A 48-amino-acid chain; its full sequence is DNA-directed RNA polymerase subunit Rpo12 (48 aa).

3 residues coordinate Zn(2+): Cys9, Cys26, and Cys29.

This sequence belongs to the archaeal Rpo12/eukaryotic RPC10 RNA polymerase subunit family. As to quaternary structure, part of the RNA polymerase complex. The cofactor is Zn(2+).

The protein resides in the cytoplasm. The enzyme catalyses RNA(n) + a ribonucleoside 5'-triphosphate = RNA(n+1) + diphosphate. Functionally, DNA-dependent RNA polymerase (RNAP) catalyzes the transcription of DNA into RNA using the four ribonucleoside triphosphates as substrates. The protein is DNA-directed RNA polymerase subunit Rpo12 of Sulfurisphaera tokodaii (strain DSM 16993 / JCM 10545 / NBRC 100140 / 7) (Sulfolobus tokodaii).